The primary structure comprises 397 residues: Acetate kinase (397 aa).

A Mg(2+)-binding site is contributed by N8. Residue K15 participates in ATP binding. R90 serves as a coordination point for substrate. D147 acts as the Proton donor/acceptor in catalysis. ATP contacts are provided by residues 207–211 (HLGAG), 283–285 (DMR), and 330–334 (GVGEN). E383 is a binding site for Mg(2+).

Belongs to the acetokinase family. As to quaternary structure, homodimer. Requires Mg(2+) as cofactor. The cofactor is Mn(2+).

The protein resides in the cytoplasm. It carries out the reaction acetate + ATP = acetyl phosphate + ADP. It participates in metabolic intermediate biosynthesis; acetyl-CoA biosynthesis; acetyl-CoA from acetate: step 1/2. Functionally, catalyzes the formation of acetyl phosphate from acetate and ATP. Can also catalyze the reverse reaction. This is Acetate kinase from Fructilactobacillus sanfranciscensis (Lactobacillus sanfranciscensis).